The primary structure comprises 283 residues: tRNA (guanine-N(1)-)-methyltransferase (283 aa).

Residues G113 and 133 to 138 each bind S-adenosyl-L-methionine; that span reads IGDYVL.

Belongs to the RNA methyltransferase TrmD family. As to quaternary structure, homodimer.

It localises to the cytoplasm. It catalyses the reaction guanosine(37) in tRNA + S-adenosyl-L-methionine = N(1)-methylguanosine(37) in tRNA + S-adenosyl-L-homocysteine + H(+). Its function is as follows. Specifically methylates guanosine-37 in various tRNAs. This Parafrankia sp. (strain EAN1pec) protein is tRNA (guanine-N(1)-)-methyltransferase.